The sequence spans 424 residues: UPF0229 protein ECA2349 (424 aa).

The disordered stretch occupies residues 53-111 (SIPNADINEPMFHQGRGGHRHRVHPGNDHFVQNDKIERPQGGGGSGSGQGDASKDGEGD). The span at 77–90 (PGNDHFVQNDKIER) shows a compositional bias: basic and acidic residues. The segment covering 92 to 101 (QGGGGSGSGQ) has biased composition (gly residues).

It belongs to the UPF0229 family.

This is UPF0229 protein ECA2349 from Pectobacterium atrosepticum (strain SCRI 1043 / ATCC BAA-672) (Erwinia carotovora subsp. atroseptica).